The primary structure comprises 421 residues: D-amino acid dehydrogenase (421 aa).

Residue 3–17 participates in FAD binding; sequence VIVLGSGVIGVASAY.

This sequence belongs to the DadA oxidoreductase family. Requires FAD as cofactor.

The enzyme catalyses a D-alpha-amino acid + A + H2O = a 2-oxocarboxylate + AH2 + NH4(+). It functions in the pathway amino-acid degradation; D-alanine degradation; NH(3) and pyruvate from D-alanine: step 1/1. Functionally, oxidative deamination of D-amino acids. This is D-amino acid dehydrogenase from Acinetobacter baumannii (strain SDF).